A 266-amino-acid polypeptide reads, in one-letter code: MERWRLLRDGELLTTHSSWILPVRQGDMPAMLKVARIPDEEAGYRLLTWWDGQGAARVFASAAGALLMERASGAGDLAQIAWSGQDDEACRILCDTAARLHAPRSGPPPDLHPLQEWFQPLFRLAAEHAALAPAASVARQLLAAPREVCPLHGDLHHENVLDFGDRGWLAIDPHGLLGERTFDYANIFTNPDLSDPGRPLAILPGRLEARLSIVVATTGFEPERLLRWIIAWTGLSAAWFIGDGDGEGEGAAIDLAVNAMARRLLD.

The active-site Proton acceptor is D154.

It belongs to the aminoglycoside phosphotransferase family.

It catalyses the reaction streptomycin + ATP = streptomycin 3''-phosphate + ADP + H(+). Functionally, the aminoglycoside phosphotransferases achieve inactivation of their antibiotic substrates by phosphorylation. The protein is Streptomycin 3''-kinase (str) of Klebsiella pneumoniae.